The sequence spans 483 residues: Probable zinc metalloprotease PTT_08196 (483 aa).

Residues 1 to 18 form the signal peptide; that stretch reads MLFRSVILSNALLLPACA. N-linked (GlcNAc...) asparagine glycans are attached at residues Asn96 and Asn121. Residues His167, Asp187, and Glu220 each contribute to the Zn(2+) site. N-linked (GlcNAc...) asparagine glycosylation occurs at Asn235. Asp247 lines the Zn(2+) pocket. N-linked (GlcNAc...) asparagine glycans are attached at residues Asn310, Asn362, Asn401, Asn411, and Asn421. Residues 396–483 enclose the Fibronectin type-III domain; sequence PAMPRNVTID…KSPAVYPFPA (88 aa).

It belongs to the peptidase M28 family. M28B subfamily. It depends on Zn(2+) as a cofactor.

The protein resides in the secreted. The chain is Probable zinc metalloprotease PTT_08196 from Pyrenophora teres f. teres (strain 0-1) (Barley net blotch fungus).